A 310-amino-acid polypeptide reads, in one-letter code: Acetylglutamate kinase (310 aa).

Substrate-binding positions include 83–84 (GG), Arg105, and Asn207.

Belongs to the acetylglutamate kinase family. ArgB subfamily.

The protein resides in the cytoplasm. The catalysed reaction is N-acetyl-L-glutamate + ATP = N-acetyl-L-glutamyl 5-phosphate + ADP. It participates in amino-acid biosynthesis; L-arginine biosynthesis; N(2)-acetyl-L-ornithine from L-glutamate: step 2/4. Functionally, catalyzes the ATP-dependent phosphorylation of N-acetyl-L-glutamate. The protein is Acetylglutamate kinase of Ralstonia nicotianae (strain ATCC BAA-1114 / GMI1000) (Ralstonia solanacearum).